Here is a 1513-residue protein sequence, read N- to C-terminus: MGLPLARLVAVCLVLALAKGLELQKEARSRNHVCSTWGDFHYKTFDGDVFRFPGLCDYNFASDCRDSYKEFAVHLKRGLDKAGGHSSIESVLITIKDDTIYLTHKLAVVNGAMVSTPHYSSGLLIEKNDAYTKVYSRAGLSLMWNREDALMVELDGRFQNHTCGLCGDFNGMQANNEFLSDGIRFSAIEFGNMQKINKPEVVCEDPEEVQEPESCSEHRAECERLLTSTAFEDCQARVPVELYVLACMHDRCQCPQGGACECSTLAEFSRQCSHAGGRPENWRTASLCPKKCPGNMVYLESGSPWLDTCSHLEVSSLCEEHYMDGCFCPEGTVYDDITGSGCIPVSQCHCKLHGHLYMPGQEITNDCEQCVCNAGRWMCKDLPCPETCALEGGSHITTFDGKKFTFHGDCYYVLTKTKYNDSYALLGELASCGSTDKQTCLKTVVLLTDNKKNVVAFKSGGSVLLNEMEVSLPHVAASFSIFKPSSYHIVVNTMFGLRLQIQLVPVMQLFVTLDQSAQGQVQGLCGNFNGLESDDFMTSGGMVEATGAGFANTWKAQSSCHDKLDWLDDPCPLNIESANYAEHWCSLLKRSETPFARCHLAVDPTEYYKRCKYDTCNCQNNEDCMCAALSSYARACAAKGVMLWGWRESVCNKDVHACPSSQIFMYNLTTCQQTCRSISEGDTHCLKGFAPVEGCGCPDHTFMDEKGRCVPLSKCSCYHHGLYLEAGDVILRQEERCICRNGRLQCTQVKLIGHTCLSPQILVDCNNLTALAIREPRPTSCQTLVARYYHTECISGCVCPDGLLDNGRGGCVVEDECPCIHNKQFYDSGKSIKLDCNNTCTCQKGRWECTRYACHSTCSIYGSGHYITFDGKHYDFDGHCSYVAVQDYCGQNSTGSFSIITENVPCGTTGVTCSKAIKIFIGGTELKLVDKHRVVKQLEEGHHVPFITREVGLYLVVEVSSGIIVIWDKKTTIFIKLDPSYKGNVCGLCGNFDDQTKNDFTTRDHMVVASELDFGNSWKEASTCPDVSHNPDPCSLNPHRRSWAEKQCSIIKSDVFLACHGKVDPTVFYDACVHDSCSCDTGGDCECFCSAVASYAQECTKAEACVFWRTPDLCPVFCDYYNPPDECEWHYEPCGNRSFETCRTLNGIHSNISVSYLEGCYPRCPEDRPIYDEDLKKCVSGDKCGCYIEDTRYPPGGSVPTDEICMSCTCTNTSEIICRPDEGKIINQTQDGIFCYWETCGSNGTVEKHFEICVSSTLSPTSMTSFTTTSTPISTTPISTTITTTSATATTTVPCCFWSDWINNNHPTSGNGGDRENFEHVCSAPENIECRAATDPKLDWTELGQKVQCNVSEGLICNNEDQYGTGQFELCYDYEIRVNCCFPMEYCLSTVSPTTSTPISSTPQPTSSPTTLPTTSPLTSSATSPTTSHITSTVSPTTSPTTSTTSPTTSPTTSTTSPTTSTTSPTPSPTTSTTSPTPSPTTSTTSPTPSPTTSTTSPTTSPITSPTTSTTSP.

The first 20 residues, 1–20 (MGLPLARLVAVCLVLALAKG), serve as a signal peptide directing secretion. Positions 32–204 (HVCSTWGDFH…KINKPEVVCE (173 aa)) constitute a VWFD 1 domain. 28 disulfide bridges follow: Cys-34/Cys-166, Cys-56/Cys-203, Cys-64/Cys-163, Cys-215/Cys-252, Cys-222/Cys-247, Cys-234/Cys-272, Cys-254/Cys-260, Cys-262/Cys-288, Cys-292/Cys-326, Cys-309/Cys-348, Cys-328/Cys-342, Cys-350/Cys-372, Cys-367/Cys-384, Cys-370/Cys-379, Cys-388/Cys-525, Cys-410/Cys-560, Cys-432/Cys-440, Cys-571/Cys-616, Cys-585/Cys-611, Cys-598/Cys-636, Cys-618/Cys-624, Cys-626/Cys-651, Cys-658/Cys-695, Cys-671/Cys-685, Cys-675/Cys-715, Cys-697/Cys-709, Cys-717/Cys-739, and Cys-737/Cys-746. Ca(2+) is bound at residue Asp-46. Positions 143 and 151 each coordinate Cu(+). Cu(2+) is bound at residue Glu-153. Asn-160 carries an N-linked (GlcNAc...) asparagine glycan. Residues Asp-168, Asn-170, and Glu-177 each contribute to the Ca(2+) site. Cu(2+)-binding residues include His-274 and His-321. Residues 292-348 (CPGNMVYLESGSPWLDTCSHLEVSSLCEEHYMDGCFCPEGTVYDDITGSGCIPVSQC) enclose the TIL domain. Position 323 (Met-323) interacts with Cu(+). One can recognise a VWFC domain in the interval 350–410 (CKLHGHLYMP…GKKFTFHGDC (61 aa)). The VWFD 2 domain occupies 386 to 561 (ETCALEGGSH…NTWKAQSSCH (176 aa)). A Ca(2+)-binding site is contributed by Asp-400. N-linked (GlcNAc...) asparagine glycosylation is present at Asn-420. The Ca(2+) site is built by Asn-527, Asn-529, Leu-531, Asp-534, and Asp-535. Asn-667 carries N-linked (GlcNAc...) asparagine glycosylation. Asn-767 is a glycosylation site (N-linked (GlcNAc...) asparagine). Intrachain disulfides connect Cys-781-Cys-817, Cys-799-Cys-811, Cys-819-Cys-842, Cys-836-Cys-854, Cys-840-Cys-849, Cys-858-Cys-989, Cys-880-Cys-1024, Cys-889-Cys-986, Cys-906-Cys-913, Cys-1034-Cys-1077, Cys-1048-Cys-1072, Cys-1059-Cys-1099, Cys-1079-Cys-1087, Cys-1089-Cys-1114, Cys-1105-Cys-1134, Cys-1118-Cys-1160, Cys-1142-Cys-1184, Cys-1164-Cys-1178, Cys-1186-Cys-1210, Cys-1205-Cys-1235, and Cys-1208-Cys-1218. The N-linked (GlcNAc...) asparagine glycan is linked to Asn-837. In terms of domain architecture, VWFD 3 spans 856–1025 (STCSIYGSGH…NSWKEASTCP (170 aa)). Position 870 (Asp-870) interacts with Ca(2+). N-linked (GlcNAc...) asparagine glycosylation occurs at Asn-892. 4 residues coordinate Ca(2+): Asn-991, Asp-993, Asn-998, and Asp-999. N-linked (GlcNAc...) asparagine glycosylation is found at Asn-1136 and Asn-1151. 3 N-linked (GlcNAc...) asparagine glycosylation sites follow: Asn-1212, Asn-1227, and Asn-1243. Residues Thr-1264, Thr-1267, Thr-1268, and Thr-1280 are each glycosylated (O-linked (GalNAc) threonine). A glycan (O-linked (GalNAc) serine) is linked at Ser-1286. The O-linked (GalNAc) threonine glycan is linked to Thr-1290. Positions 1303, 1306, 1309, 1313, 1314, and 1316 each coordinate Ca(2+). N-linked (GlcNAc...) asparagine glycosylation occurs at Asn-1350. The Ca(2+) site is built by Asp-1373 and Tyr-1374. Tandem repeats lie at residues 1392-1407 (SPTT…QPTS), 1408-1423 (SPTT…SSAT), 1424-1434 (SPTTSHITSTV), 1435-1445 (SPTTSPTTSTT), 1446-1456 (SPTTSPTTSTT), 1457-1467 (SPTTSTTSPTP), 1468-1478 (SPTTSTTSPTP), 1479-1489 (SPTTSTTSPTP), 1490-1500 (SPTTSTTSPTT), 1501-1511 (SPITSPTTSTT), and 1512-1513 (SP). The tract at residues 1392-1513 (SPTTSTPISS…TSPTTSTTSP (122 aa)) is approximate repeats. The disordered stretch occupies residues 1392–1513 (SPTTSTPISS…TSPTTSTTSP (122 aa)).

In terms of assembly, homomultimer; disulfide-linked. The N- and C-terminus mediate their assembly into higher order structures to form filaments. The CTCK domains of two polypeptides associate in the endoplasmic reticulum to generate intermolecularly disulfide-bonded dimers. These dimers progress to the Golgi apparatus, which is a more acidic environment than the endoplasmic reticulum. Under acidic conditions, the N-termini form non-covalent intermolecular interactions that juxtapose assemblies of the third VWD domain (VWD3) from different CTCK-linked dimers. The VWD3 assemblies then become disulfide bonded to one another to produce long, disulfide-linked polymers that remain highly compact until secretion. Interacts with FCGBP. Interacts with AGR2; disulfide-linked. In terms of processing, O-glycosylated. O-glycosylation is required for mucin assembly. Goblet cells synthesize two forms of mucin that differ in branched chain O-glycosylation and the site of production in the colon. May undergo proteolytic cleavage in the outer mucus layer of the colon, contributing to the expanded volume and loose nature of this layer which allows for bacterial colonization in contrast to the inner mucus layer which is dense and devoid of bacteria. Post-translationally, at low pH of 6 and under, undergoes autocatalytic cleavage in vitro in the N-terminal region of the fourth VWD domain. It is likely that this also occurs in vivo and is triggered by the low pH of the late secretory pathway. As to expression, expressed in intestine and airway.

The protein localises to the secreted. Functionally, coats the epithelia of the intestines and other mucus membrane-containing organs to provide a protective, lubricating barrier against particles and infectious agents at mucosal surfaces. Major constituent of the colon mucus, which is mainly formed by large polymeric networks of MUC2 secreted by goblet cells that cover the exposed surfaces of intestine. MUC2 networks form hydrogels that guard the underlying epithelium from pathogens and other hazardous matter entering from the outside world, while permitting nutrient absorption and gas exchange. Acts as a divalent copper chaperone that protects intestinal cells from copper toxicity and facilitates nutritional copper unptake into cells. Binds both Cu(2+) and its reduced form, Cu(1+), at two juxtaposed binding sites: Cu(2+), once reduced to Cu(1+) by vitamin C (ascorbate) or other dietary antioxidants, transits to the other binding site. MUC2-bound Cu(1+) is protected from oxidation in aerobic environments, and can be released for nutritional delivery to cells. Mucin gels store antimicrobial molecules that participate in innate immunity. Mucin glycoproteins also house and feed the microbiome, lubricate tissue surfaces, and may facilitate the removal of contaminants and waste products from the body. Goblet cells synthesize two forms of MUC2 mucin that differ in branched chain O-glycosylation and the site of production in the colon: a (1) 'thick' mucus that wraps the microbiota to form fecal pellets is produced in the proximal, ascending colon. 'Thick' mucus transits along the descending colon and is lubricated by a (2) 'thin' MUC2 mucus produced in the distal colon which adheres to the 'thick' mucus. The sequence is that of Mucin-2 from Rattus norvegicus (Rat).